A 208-amino-acid chain; its full sequence is CASP-like protein 1D1 (208 aa).

A disordered region spans residues 1-36; sequence MSSVDTEKPAPPPLETEAPPPPPPPPPPPPPPPPPP. Residues 1–41 are Cytoplasmic-facing; the sequence is MSSVDTEKPAPPPLETEAPPPPPPPPPPPPPPPPPPAGYSA. Residues 9-36 are compositionally biased toward pro residues; the sequence is PAPPPLETEAPPPPPPPPPPPPPPPPPP. Residues 42 to 62 form a helical membrane-spanning segment; that stretch reads LDVVLRILLLGSAVASVVVMV. The Extracellular segment spans residues 63–89; sequence TSVQTKLIAVAGVPVLVSNKAKFQNSP. A helical membrane pass occupies residues 90-110; that stretch reads AFIYFVAALSVVGLYSIITTL. Residues 111–133 are Cytoplasmic-facing; the sequence is ASFIFISKPSCSTKTILHLAIWD. A helical transmembrane segment spans residues 134-154; sequence VLMLGLAASATGTAGGVAYVG. Residues 155-180 are Extracellular-facing; sequence LKGNSHVGWNKVCNTYDKFCRHVGGS. The helical transmembrane segment at 181–201 threads the bilayer; it reads IAVALFASILLVLLVWLSLFT. Topologically, residues 202 to 208 are cytoplasmic; sequence LYSRIRK.

The protein belongs to the Casparian strip membrane proteins (CASP) family. As to quaternary structure, homodimer and heterodimers.

It is found in the cell membrane. This is CASP-like protein 1D1 from Vitis vinifera (Grape).